Reading from the N-terminus, the 100-residue chain is Putative sodium channel toxin Ts26 (100 aa).

An N-terminal signal peptide occupies residues 1–22; it reads MVKSAMKIVILILFVLLIRVES. Residues 24–92 form the LCN-type CS-alpha/beta domain; sequence RNGYPDISDG…VMDTTIEYCE (69 aa). 4 disulfide bridges follow: C38-C64, C50-C69, C54-C71, and C65-C91.

It belongs to the long (4 C-C) scorpion toxin superfamily. Sodium channel inhibitor family. Expressed by the venom gland.

It localises to the secreted. Putative sodium channel toxin. This is Putative sodium channel toxin Ts26 from Tityus serrulatus (Brazilian scorpion).